A 171-amino-acid polypeptide reads, in one-letter code: Mitochondrial import inner membrane translocase subunit Tim17-A (171 aa).

Cysteine 9 and cysteine 78 form a disulfide bridge. Helical transmembrane passes span 17–37 (CGGA…IKGF), 63–77 (GGSF…SMID), and 113–133 (VGSA…GILL). The interval 144–171 (GPQFAEDPSQLPSTQLPSSPFGDYRQYQ) is disordered. Residues 151–163 (PSQLPSTQLPSSP) are compositionally biased toward low complexity.

Belongs to the Tim17/Tim22/Tim23 family. In terms of assembly, component of the TIM23 complex at least composed of TIMM23, TIMM17 (TIMM17A or TIMM17B) and TIMM50. The complex interacts with the TIMM44 component of the PAM complex and with DNAJC15. Degraded by YMEL1 downstream of the integrated stress response (ISR).

Its subcellular location is the mitochondrion inner membrane. In terms of biological role, essential component of the TIM23 complex, a complex that mediates the translocation of transit peptide-containing proteins across the mitochondrial inner membrane. This Homo sapiens (Human) protein is Mitochondrial import inner membrane translocase subunit Tim17-A (TIMM17A).